A 465-amino-acid polypeptide reads, in one-letter code: NADH-quinone oxidoreductase subunit N (465 aa).

13 helical membrane passes run 6-26 (ILPE…GIVF), 30-50 (TINL…ILSA), 66-86 (LYIR…LLLL), 98-118 (SILI…NNLI), 156-176 (ALSS…TGLV), 194-214 (IVFG…IAPF), 226-246 (PTIV…TFLI), 261-281 (FQPV…FGAL), 289-309 (LLAY…SIFT), 317-337 (LIYL…FIQI), 363-383 (ILLF…KLFI), 391-411 (GFIG…YYYL), and 432-452 (SLFI…MCVE).

The protein belongs to the complex I subunit 2 family. In terms of assembly, NDH-1 is composed of 14 different subunits. Subunits NuoA, H, J, K, L, M, N constitute the membrane sector of the complex.

The protein resides in the cell membrane. It carries out the reaction a quinone + NADH + 5 H(+)(in) = a quinol + NAD(+) + 4 H(+)(out). NDH-1 shuttles electrons from NADH, via FMN and iron-sulfur (Fe-S) centers, to quinones in the respiratory chain. The immediate electron acceptor for the enzyme in this species is believed to be ubiquinone. Couples the redox reaction to proton translocation (for every two electrons transferred, four hydrogen ions are translocated across the cytoplasmic membrane), and thus conserves the redox energy in a proton gradient. The polypeptide is NADH-quinone oxidoreductase subunit N (Wolbachia sp. subsp. Brugia malayi (strain TRS)).